A 575-amino-acid polypeptide reads, in one-letter code: Phosphoenolpyruvate-protein phosphotransferase (575 aa).

Catalysis depends on H191, which acts as the Tele-phosphohistidine intermediate. Phosphoenolpyruvate is bound by residues R298 and R334. Mg(2+)-binding residues include E435 and D459. Phosphoenolpyruvate-binding positions include 458 to 459 (ND) and R469. C506 acts as the Proton donor in catalysis.

Belongs to the PEP-utilizing enzyme family. In terms of assembly, homodimer. Mg(2+) serves as cofactor.

Its subcellular location is the cytoplasm. It carries out the reaction L-histidyl-[protein] + phosphoenolpyruvate = N(pros)-phospho-L-histidyl-[protein] + pyruvate. In terms of biological role, general (non sugar-specific) component of the phosphoenolpyruvate-dependent sugar phosphotransferase system (sugar PTS). This major carbohydrate active-transport system catalyzes the phosphorylation of incoming sugar substrates concomitantly with their translocation across the cell membrane. Enzyme I transfers the phosphoryl group from phosphoenolpyruvate (PEP) to the phosphoryl carrier protein (HPr). This chain is Phosphoenolpyruvate-protein phosphotransferase (ptsI), found in Lactococcus lactis subsp. cremoris (Streptococcus cremoris).